The chain runs to 431 residues: MKVSMEKIENNVVKLEVTVEAKKFNEAMKKSYAKNVKKFNVPGFRKGKAPMSIIKRYYGETVFYEDAINICCDDTYPKALEEKEIKPVDYPQIDIVEIGEGKDFVYTAQVTVMPEVELGEYKGLEAKKVSYDVKDEDVENTLKEMQQRNARIQTKEDEEAIEKGNIAVIDFKGYVDEVPFEGGEGYDYSLEIGSGTFIDNFEDQLIGAKKGEEKEVKVKFPEEYGSEELNGKEAKFQVTIKEIKVKELPAIDDEFVKEVSEFDTLDELKEDIKAKIKEGNDKRAKAEYEETVINLACENAKVDIPEVMVENEINNMLKDLEMKLRYQGIDLETYYQYTNSTEEKVREYMKEAATKRVKTDLVLAEVAKAEKLEATDEEIMDRAKEMAKQYGSGELEKTAKLLADSQNALLKADVINEKVVKLIVDNSKEIE.

The PPIase FKBP-type domain maps to 164-249 (GNIAVIDFKG…IKEIKVKELP (86 aa)).

Belongs to the FKBP-type PPIase family. Tig subfamily.

The protein localises to the cytoplasm. It catalyses the reaction [protein]-peptidylproline (omega=180) = [protein]-peptidylproline (omega=0). In terms of biological role, involved in protein export. Acts as a chaperone by maintaining the newly synthesized protein in an open conformation. Functions as a peptidyl-prolyl cis-trans isomerase. This chain is Trigger factor, found in Clostridium tetani (strain Massachusetts / E88).